Here is a 303-residue protein sequence, read N- to C-terminus: tRNA pseudouridine synthase B (303 aa).

The Nucleophile role is filled by aspartate 38.

Belongs to the pseudouridine synthase TruB family. Type 1 subfamily.

The catalysed reaction is uridine(55) in tRNA = pseudouridine(55) in tRNA. Its function is as follows. Responsible for synthesis of pseudouridine from uracil-55 in the psi GC loop of transfer RNAs. This Oceanobacillus iheyensis (strain DSM 14371 / CIP 107618 / JCM 11309 / KCTC 3954 / HTE831) protein is tRNA pseudouridine synthase B.